The sequence spans 122 residues: Large ribosomal subunit protein uL14 (122 aa).

This sequence belongs to the universal ribosomal protein uL14 family. As to quaternary structure, part of the 50S ribosomal subunit. Forms a cluster with proteins L3 and L19. In the 70S ribosome, L14 and L19 interact and together make contacts with the 16S rRNA in bridges B5 and B8.

Binds to 23S rRNA. Forms part of two intersubunit bridges in the 70S ribosome. This is Large ribosomal subunit protein uL14 from Christiangramia forsetii (strain DSM 17595 / CGMCC 1.15422 / KT0803) (Gramella forsetii).